We begin with the raw amino-acid sequence, 300 residues long: Transacylase cctO (300 aa).

The helical transmembrane segment at I52 to I72 threads the bilayer. Short sequence motifs (HXXHC) lie at residues H185 to C189 and H225 to C229. N-linked (GlcNAc...) asparagine glycosylation occurs at N270.

This sequence belongs to the ustYa family.

It localises to the membrane. It functions in the pathway mycotoxin biosynthesis. Transacylase; part of the gene cluster that mediates the biosynthesis of the mycotoxin cyclochlorotine, a hepatotoxic and carcinogenic cyclic chlorinated pentapeptide. Within the pathway, cctO catalyzes the intramolecular O,N-transacylation from isocyclochlorotine to cyclochlorotine. The NRPS cctN initially catalyzes the condensation of L-serine (Ser), Pro, L-2-aminobutyrate (2Abu), Ser, and beta-Phe in this order to produce isocyclotine. After the dichlorination of Pro2 catalyzed by cctP2 to produce isocyclochlorotine, the cctO-mediated transacylation of isocyclochlorotine can furnish cyclochlorotine. The subsequent hydroxylation of cyclochlorotine by cctR yields hydroxycyclochlorotine as the final product. CctP1 probably acts as a phenylalanine aminomutase and provides the uncommon building block beta-Phe. Furthermore, 2Abu can be synthesized from threonine by one of the threonine dehydratases and transaminases localized outside of the cluster. The functions of the remaining proteins encoded by the cluster, cctM and cctT, have not been identified yet. This Talaromyces islandicus (Penicillium islandicum) protein is Transacylase cctO.